A 347-amino-acid polypeptide reads, in one-letter code: P2Y purinoceptor 12 (347 aa).

Residues 1–33 (MDVPGVNTTSANTTFSPGTSTLCVRDYKITQVL) are Extracellular-facing. N-linked (GlcNAc...) asparagine glycans are attached at residues Asn7 and Asn12. Intrachain disulfides connect Cys23/Cys276 and Cys103/Cys181. Residues 34-56 (FPLLYTVLFFAGLITNSLAMRIF) form a helical membrane-spanning segment. Residues 57 to 67 (FQIRSKSNFII) lie on the Cytoplasmic side of the membrane. Phosphoserine occurs at positions 61 and 63. Residues 68-88 (FLKNTVISDLLMILTFPFKIL) form a helical membrane-spanning segment. The Extracellular portion of the chain corresponds to 89–103 (SDAKLGAGPLRTLVC). 3 residues coordinate ADP: Arg99, Cys103, and Tyr111. The chain crosses the membrane as a helical span at residues 104 to 124 (QVTSVTFYFTMYISISFLGLI). The Cytoplasmic segment spans residues 125-148 (TIDRYLKTTRPFKTSSPSNLLGAK). A helical membrane pass occupies residues 149–168 (ILSVVIWAFMFLISLPNMIL). ADP-binding positions include 162-165 (SLPN), 181-185 (CSFLK), His193, and Asn197. The Extracellular segment spans residues 169–191 (TNRRPKDKDVTKCSFLKSEFGLV). A helical membrane pass occupies residues 192 to 213 (WHEIVNYICQVIFWINFLIVIV). Over 214 to 239 (CYSLITKELYRSYVRTRGSAKVPKKK) the chain is Cytoplasmic. Residues 240–265 (VNVKVFIIIAVFFICFVPFHFARIPY) traverse the membrane as a helical segment. ADP-binding positions include 262–265 (RIPY), Gln269, and Lys286. At 266–284 (TLSQTRAVFDCSAENTLFY) the chain is on the extracellular side. Residues 285 to 304 (VKESTLWLTSLNACLDPFIY) form a helical membrane-spanning segment. Topologically, residues 305 to 347 (FFLCKSFRNSLTSMLRCSNSTSTSGTNKKKGQEGGEPSEETPM) are cytoplasmic. A disordered region spans residues 321–347 (CSNSTSTSGTNKKKGQEGGEPSEETPM).

Belongs to the G-protein coupled receptor 1 family.

The protein localises to the cell membrane. Receptor for ADP and ATP coupled to G-proteins that inhibit the adenylyl cyclase second messenger system. Required for normal platelet aggregation and blood coagulation. The protein is P2Y purinoceptor 12 (P2ry12) of Mus musculus (Mouse).